The chain runs to 257 residues: Zinc transporter ZupT (257 aa).

A run of 5 helical transmembrane segments spans residues 5–25 (LILTLLAGAATFIGAFLAVLG), 32–52 (VLAFSLGFAAGIMLLISLMEM), 61–81 (GMSPVLGYGMFIIGLLGYFGL), 109–129 (AILLTLGISLHNFPEGIATFV), and 137–157 (LGMGIALAVALHNIPEGLAVA). N120 and E123 together coordinate Fe(2+). E123 and H148 together coordinate Zn(2+). N149, E152, and E181 together coordinate Fe(2+). E152 provides a ligand contact to Zn(2+). Helical transmembrane passes span 182-202 (ILGGVLAWLILGSLISPVVMA), 203-223 (AVMAAVAGIMVALSVDELMPL), and 236-256 (GVLCGMSVMGLSLVVLQTAGI).

It belongs to the ZIP transporter (TC 2.A.5) family. ZupT subfamily.

The protein localises to the cell inner membrane. The enzyme catalyses Zn(2+)(in) = Zn(2+)(out). Mediates zinc uptake. May also transport other divalent cations. The chain is Zinc transporter ZupT from Escherichia fergusonii (strain ATCC 35469 / DSM 13698 / CCUG 18766 / IAM 14443 / JCM 21226 / LMG 7866 / NBRC 102419 / NCTC 12128 / CDC 0568-73).